The primary structure comprises 78 residues: Acyl carrier protein (78 aa).

Positions 2–77 constitute a Carrier domain; it reads STIEERVKKI…AAIDYVNSHK (76 aa). The residue at position 37 (Ser37) is an O-(pantetheine 4'-phosphoryl)serine.

This sequence belongs to the acyl carrier protein (ACP) family. 4'-phosphopantetheine is transferred from CoA to a specific serine of apo-ACP by AcpS. This modification is essential for activity because fatty acids are bound in thioester linkage to the sulfhydryl of the prosthetic group.

Its subcellular location is the cytoplasm. The protein operates within lipid metabolism; fatty acid biosynthesis. Carrier of the growing fatty acid chain in fatty acid biosynthesis. This is Acyl carrier protein from Pseudomonas putida (strain GB-1).